Consider the following 226-residue polypeptide: Isoprenyl transferase (226 aa).

The active site involves Asp-12. Position 12 (Asp-12) interacts with Mg(2+). Residues 13–16 (GNAR), Trp-17, Lys-25, His-29, and 57–59 (SFE) each bind substrate. Asn-60 acts as the Proton acceptor in catalysis. Substrate contacts are provided by residues Trp-61, Arg-63, Arg-174, and 180 to 182 (RIS). Glu-193 provides a ligand contact to Mg(2+).

Belongs to the UPP synthase family. In terms of assembly, homodimer. Mg(2+) is required as a cofactor.

Catalyzes the condensation of isopentenyl diphosphate (IPP) with allylic pyrophosphates generating different type of terpenoids. This chain is Isoprenyl transferase, found in Rickettsia prowazekii (strain Madrid E).